We begin with the raw amino-acid sequence, 98 residues long: HssA/B-like protein 50 (98 aa).

Disordered regions lie at residues 1-26 and 68-98; these read MTLFSSISSISNPMTSSKSSISSFGS and TRGSCRGNGGSSNPVNGHGGMGGGNGSCCGI. Residues 84–98 are compositionally biased toward gly residues; that stretch reads GHGGMGGGNGSCCGI.

It belongs to the hssA/B family.

The sequence is that of HssA/B-like protein 50 (hssl50) from Dictyostelium discoideum (Social amoeba).